A 108-amino-acid polypeptide reads, in one-letter code: uncharacterized protein (108 aa).

This is an uncharacterized protein from Acidianus sp. F28 (AFV-2).